A 347-amino-acid polypeptide reads, in one-letter code: Phosphoribosylformylglycinamidine cyclo-ligase (347 aa).

Belongs to the AIR synthase family.

It localises to the cytoplasm. It carries out the reaction 2-formamido-N(1)-(5-O-phospho-beta-D-ribosyl)acetamidine + ATP = 5-amino-1-(5-phospho-beta-D-ribosyl)imidazole + ADP + phosphate + H(+). Its pathway is purine metabolism; IMP biosynthesis via de novo pathway; 5-amino-1-(5-phospho-D-ribosyl)imidazole from N(2)-formyl-N(1)-(5-phospho-D-ribosyl)glycinamide: step 2/2. In Alkalilimnicola ehrlichii (strain ATCC BAA-1101 / DSM 17681 / MLHE-1), this protein is Phosphoribosylformylglycinamidine cyclo-ligase.